Consider the following 159-residue polypeptide: Phosphopantetheine adenylyltransferase (159 aa).

S8 serves as a coordination point for substrate. ATP is bound by residues 8–9 and H16; that span reads SF. Residues K40, T72, and R86 each coordinate substrate. Residues 87 to 89, E97, and 122 to 128 each bind ATP; these read GLR and HSFVSSS.

The protein belongs to the bacterial CoaD family. Homohexamer. It depends on Mg(2+) as a cofactor.

The protein localises to the cytoplasm. The catalysed reaction is (R)-4'-phosphopantetheine + ATP + H(+) = 3'-dephospho-CoA + diphosphate. Its pathway is cofactor biosynthesis; coenzyme A biosynthesis; CoA from (R)-pantothenate: step 4/5. In terms of biological role, reversibly transfers an adenylyl group from ATP to 4'-phosphopantetheine, yielding dephospho-CoA (dPCoA) and pyrophosphate. This chain is Phosphopantetheine adenylyltransferase, found in Synechococcus sp. (strain JA-3-3Ab) (Cyanobacteria bacterium Yellowstone A-Prime).